Reading from the N-terminus, the 845-residue chain is Protein translocase subunit SecA 1 (845 aa).

ATP-binding positions include Gln85, 103-107, and Asp492; that span reads GEGKT.

Belongs to the SecA family. Monomer and homodimer. Part of the essential Sec protein translocation apparatus which comprises SecA, SecYEG and auxiliary proteins SecDF. Other proteins may also be involved.

The protein resides in the cell membrane. Its subcellular location is the cytoplasm. It catalyses the reaction ATP + H2O + cellular proteinSide 1 = ADP + phosphate + cellular proteinSide 2.. In terms of biological role, part of the Sec protein translocase complex. Interacts with the SecYEG preprotein conducting channel. Has a central role in coupling the hydrolysis of ATP to the transfer of proteins into and across the cell membrane, serving as an ATP-driven molecular motor driving the stepwise translocation of polypeptide chains across the membrane. This chain is Protein translocase subunit SecA 1, found in Corynebacterium efficiens (strain DSM 44549 / YS-314 / AJ 12310 / JCM 11189 / NBRC 100395).